A 681-amino-acid chain; its full sequence is Methionine--tRNA ligase (681 aa).

The short motif at 27 to 37 (DYANGTPHIGH) is the 'HIGH' region element. A 'KMSKS' region motif is present at residues 316–320 (KMGKS). K319 is a binding site for ATP. A disordered region spans residues 522 to 571 (FPKPEPKADETKNAEAKPPKPQAKKEKKTVTDTAPAKTTEQKPEAAAPAQ). Positions 525-539 (PEPKADETKNAEAKP) are enriched in basic and acidic residues. Residues 580-681 (DFAKIDLRIA…LDLPSGTKVR (102 aa)) form the tRNA-binding domain.

This sequence belongs to the class-I aminoacyl-tRNA synthetase family. MetG type 2B subfamily. Homodimer.

The protein resides in the cytoplasm. It carries out the reaction tRNA(Met) + L-methionine + ATP = L-methionyl-tRNA(Met) + AMP + diphosphate. Its function is as follows. Is required not only for elongation of protein synthesis but also for the initiation of all mRNA translation through initiator tRNA(fMet) aminoacylation. The polypeptide is Methionine--tRNA ligase (metG) (Deinococcus radiodurans (strain ATCC 13939 / DSM 20539 / JCM 16871 / CCUG 27074 / LMG 4051 / NBRC 15346 / NCIMB 9279 / VKM B-1422 / R1)).